Consider the following 248-residue polypeptide: Probable transcriptional regulatory protein Desal_2886 (248 aa).

The segment at 1-21 is disordered; it reads MAGHSKWANIQHRKGRQDAKR.

The protein belongs to the TACO1 family.

It localises to the cytoplasm. The chain is Probable transcriptional regulatory protein Desal_2886 from Maridesulfovibrio salexigens (strain ATCC 14822 / DSM 2638 / NCIMB 8403 / VKM B-1763) (Desulfovibrio salexigens).